The sequence spans 264 residues: 14-3-3 protein homolog (264 aa).

The segment covering 236–258 (SEAPAATEEQQQSSQAPAAQPTE) has biased composition (low complexity). The interval 236–264 (SEAPAATEEQQQSSQAPAAQPTEGKADQE) is disordered.

The protein belongs to the 14-3-3 family.

This Candida albicans (strain SC5314 / ATCC MYA-2876) (Yeast) protein is 14-3-3 protein homolog (BMH1).